The sequence spans 837 residues: Outer membrane usher protein HifC (837 aa).

Residues 1–26 (MKTKNFPLNKIAFACTLLLANPVAWA) form the signal peptide. A disulfide bridge links C813 with C833.

This sequence belongs to the fimbrial export usher family.

It localises to the cell outer membrane. Functionally, essential for piliation. The chain is Outer membrane usher protein HifC (hifC) from Haemophilus influenzae.